The primary structure comprises 255 residues: 2-dehydro-3,6-dideoxy-6-sulfogluconate aldolase (255 aa).

Residue His38 is the Proton acceptor of the active site. Residues Glu141 and Asp167 each coordinate a divalent metal cation.

The protein belongs to the HpcH/HpaI aldolase family. Homohexamer; trimer of dimers. A divalent metal cation is required as a cofactor.

The enzyme catalyses 2-dehydro-3,6-dideoxy-6-sulfo-D-gluconate = (2S)-3-sulfolactaldehyde + pyruvate. Functionally, catalyzes the retro-aldol cleavage of 2-dehydro-3,6-dideoxy-6-sulfo-D-gluconate to (2S)-3-sulfolactaldehyde and pyruvate. Is involved in a degradation pathway of sulfoquinovose (SQ) that allows P.putida SQ1 to use SQ as the sole carbon and energy source for growth. In Pseudomonas putida (Arthrobacter siderocapsulatus), this protein is 2-dehydro-3,6-dideoxy-6-sulfogluconate aldolase.